A 382-amino-acid polypeptide reads, in one-letter code: Galactokinase (382 aa).

34–37 is a binding site for substrate; sequence EHTD. 124–130 is an ATP binding site; that stretch reads GAGLSSS. Residues Ser-130 and Glu-162 each contribute to the Mg(2+) site. The active-site Proton acceptor is the Asp-174. Substrate is bound at residue Tyr-223.

The protein belongs to the GHMP kinase family. GalK subfamily.

The protein resides in the cytoplasm. The catalysed reaction is alpha-D-galactose + ATP = alpha-D-galactose 1-phosphate + ADP + H(+). The protein operates within carbohydrate metabolism; galactose metabolism. Functionally, catalyzes the transfer of the gamma-phosphate of ATP to D-galactose to form alpha-D-galactose-1-phosphate (Gal-1-P). The polypeptide is Galactokinase (Escherichia fergusonii (strain ATCC 35469 / DSM 13698 / CCUG 18766 / IAM 14443 / JCM 21226 / LMG 7866 / NBRC 102419 / NCTC 12128 / CDC 0568-73)).